The following is a 363-amino-acid chain: Protein-glutamate methylesterase/protein-glutamine glutaminase of group 3 operon (363 aa).

One can recognise a Response regulatory domain in the interval 7-124; sequence RVLIVDDSAS…RQALMESSGR (118 aa). The residue at position 58 (Asp58) is a 4-aspartylphosphate. In terms of domain architecture, CheB-type methylesterase spans 166–357; it reads PTTERIVCIG…REIMAWQQAK (192 aa). Catalysis depends on residues Ser177, His203, and Asp299.

Belongs to the CheB family. Phosphorylated by CheA. Phosphorylation of the N-terminal regulatory domain activates the methylesterase activity.

The protein resides in the cytoplasm. It catalyses the reaction [protein]-L-glutamate 5-O-methyl ester + H2O = L-glutamyl-[protein] + methanol + H(+). The catalysed reaction is L-glutaminyl-[protein] + H2O = L-glutamyl-[protein] + NH4(+). Its function is as follows. Involved in chemotaxis. Part of a chemotaxis signal transduction system that modulates chemotaxis in response to various stimuli. Catalyzes the demethylation of specific methylglutamate residues introduced into the chemoreceptors (methyl-accepting chemotaxis proteins or MCP) by CheR. Also mediates the irreversible deamidation of specific glutamine residues to glutamic acid. The chain is Protein-glutamate methylesterase/protein-glutamine glutaminase of group 3 operon from Rhodopseudomonas palustris (strain ATCC BAA-98 / CGA009).